The primary structure comprises 412 residues: MKIYLVGGAIRDALLGLPVKDRDWVVVGSTPQEMLDAGYQQVGRDFPVFLHPQTHEEYALARTERKSGSGYTDFTCYAAPDVTLEDDLKRRDLTINALAQDDNGEIIDPYNGLGDLQNRLLRHVSPAFGEDPLRVLRVARFAARYAHLGFRIADETLTLMREMTHAGELEHLTPERVWKETESALTTRNPQVFFQVLRDCGALRVLFPEIDALFGVPAPARWHPEIDTGIHTLMTLSMAAMLSPQVDVRFATLCHDLGKGLTPPELWPRHHGHGPAGVKLVEQLCQRLRVPNEIRDLARLVAEFHDLIHTFPMLNPKTIVKLFDSIDAWRKPQRVEQLALTSEADVRGRTGFESADYPQGRWLREAWEVAQSVPTKAVVEAGFKGVEIREELTRRRIAAVASWKEQRCPKPD.

ATP-binding residues include G8 and R11. The CTP site is built by G8 and R11. 2 residues coordinate Mg(2+): D21 and D23. ATP is bound by residues R91, R137, and R140. R91, R137, and R140 together coordinate CTP. One can recognise an HD domain in the interval 228–329 (TGIHTLMTLS…VKLFDSIDAW (102 aa)).

This sequence belongs to the tRNA nucleotidyltransferase/poly(A) polymerase family. Bacterial CCA-adding enzyme type 1 subfamily. In terms of assembly, monomer. Can also form homodimers and oligomers. It depends on Mg(2+) as a cofactor. Ni(2+) serves as cofactor.

The catalysed reaction is a tRNA precursor + 2 CTP + ATP = a tRNA with a 3' CCA end + 3 diphosphate. It catalyses the reaction a tRNA with a 3' CCA end + 2 CTP + ATP = a tRNA with a 3' CCACCA end + 3 diphosphate. Its function is as follows. Catalyzes the addition and repair of the essential 3'-terminal CCA sequence in tRNAs without using a nucleic acid template. Adds these three nucleotides in the order of C, C, and A to the tRNA nucleotide-73, using CTP and ATP as substrates and producing inorganic pyrophosphate. tRNA 3'-terminal CCA addition is required both for tRNA processing and repair. Also involved in tRNA surveillance by mediating tandem CCA addition to generate a CCACCA at the 3' terminus of unstable tRNAs. While stable tRNAs receive only 3'-terminal CCA, unstable tRNAs are marked with CCACCA and rapidly degraded. This is Multifunctional CCA protein from Shigella sonnei (strain Ss046).